The sequence spans 451 residues: Tubulin alpha-3 chain (451 aa).

Gln-11 is a GTP binding site. Lys-40 carries the N6-acetyllysine modification. The GTP site is built by Glu-71, Gly-144, Thr-145, Thr-179, Asn-206, and Asn-228. Residue Glu-71 coordinates Mg(2+). The active site involves Glu-254.

The protein belongs to the tubulin family. As to quaternary structure, dimer of alpha and beta chains. A typical microtubule is a hollow water-filled tube with an outer diameter of 25 nm and an inner diameter of 15 nM. Alpha-beta heterodimers associate head-to-tail to form protofilaments running lengthwise along the microtubule wall with the beta-tubulin subunit facing the microtubule plus end conferring a structural polarity. Microtubules usually have 13 protofilaments but different protofilament numbers can be found in some organisms and specialized cells. The cofactor is Mg(2+). Undergoes a tyrosination/detyrosination cycle, the cyclic removal and re-addition of a C-terminal tyrosine residue by the enzymes tubulin tyrosine carboxypeptidase (TTCP) and tubulin tyrosine ligase (TTL), respectively. Post-translationally, acetylation of alpha chains at Lys-40 stabilizes microtubules and affects affinity and processivity of microtubule motors. This modification has a role in multiple cellular functions, ranging from cell motility, cell cycle progression or cell differentiation to intracellular trafficking and signaling.

The protein resides in the cytoplasm. Its subcellular location is the cytoskeleton. The enzyme catalyses GTP + H2O = GDP + phosphate + H(+). Functionally, tubulin is the major constituent of microtubules, a cylinder consisting of laterally associated linear protofilaments composed of alpha- and beta-tubulin heterodimers. Microtubules grow by the addition of GTP-tubulin dimers to the microtubule end, where a stabilizing cap forms. Below the cap, tubulin dimers are in GDP-bound state, owing to GTPase activity of alpha-tubulin. This chain is Tubulin alpha-3 chain (TUBA3), found in Hordeum vulgare (Barley).